Consider the following 196-residue polypeptide: Large ribosomal subunit protein eL15 (196 aa).

Residues 156–196 are disordered; sequence HRGRAERGKTSAGRKGRGMRTRGRGTEKTRPSIRSHANQGK. Residues 167 to 178 are compositionally biased toward basic residues; it reads AGRKGRGMRTRG.

It belongs to the eukaryotic ribosomal protein eL15 family.

The polypeptide is Large ribosomal subunit protein eL15 (Methanoregula boonei (strain DSM 21154 / JCM 14090 / 6A8)).